The chain runs to 325 residues: Protein ORANGE-ORANGE, chloroplastic (325 aa).

Residues 1-54 (MDRVLVASYPINHLIRPHSFRIDYCWSTCFTSRLNSGKERQKLSSRWRWRSMAS) constitute a chloroplast transit peptide. Residues 53–71 (ASDSTDSSSSSSFAPSVES) show a composition bias toward low complexity. Residues 53–77 (ASDSTDSSSSSSFAPSVESDPSDKT) are disordered. 2 consecutive transmembrane segments (helical) span residues 164-184 (LYYVTCYSLIAGIILFGGLLA) and 217-237 (IVASFSGGAVGVISALMVVEV). A CR-type-like region spans residues 226–317 (VGVISALMVV…CTGMAMASEH (92 aa)). The stretch at 248–255 (CKYCLGTG) is one CXXCXGXG motif repeat. A CXXCXXXG motif repeat occupies 259–266 (CARCSNTG). A CXXCXGXG motif repeat occupies 292 to 299 (CQNCSGSG). The CXXCXXXG motif repeat unit spans residues 303-310 (CPTCLCTG).

Belongs to the orange-like family.

It localises to the plastid. Its subcellular location is the chloroplast membrane. Triggers accumulation of carotenoids, mainly beta-carotene, in fruit flesh. The sequence is that of Protein ORANGE-ORANGE, chloroplastic from Cucumis melo (Muskmelon).